The sequence spans 428 residues: RF4 protein (428 aa).

N8, N205, and N344 each carry an N-linked (GlcNAc...) asparagine glycan.

In terms of biological role, not known. This is RF4 protein (RF4) from Kluyveromyces lactis (strain ATCC 8585 / CBS 2359 / DSM 70799 / NBRC 1267 / NRRL Y-1140 / WM37) (Yeast).